Consider the following 469-residue polypeptide: Citrate synthase, mitochondrial (469 aa).

Residues 1–33 constitute a mitochondrion transit peptide; it reads MAPVMRLGSAALRSSIHLTSRQTAFTAARCYSS. His352 is an active-site residue.

Belongs to the citrate synthase family.

The protein resides in the mitochondrion matrix. The enzyme catalyses oxaloacetate + acetyl-CoA + H2O = citrate + CoA + H(+). The protein operates within carbohydrate metabolism; tricarboxylic acid cycle; isocitrate from oxaloacetate: step 1/2. This chain is Citrate synthase, mitochondrial (cit-1), found in Neurospora crassa (strain ATCC 24698 / 74-OR23-1A / CBS 708.71 / DSM 1257 / FGSC 987).